Here is a 745-residue protein sequence, read N- to C-terminus: uncharacterized protein (745 aa).

The HTH araC/xylS-type domain maps to 158–256; it reads NQVCDYIELH…HQTPKQYRGD (99 aa). DNA-binding regions (H-T-H motif) lie at residues 175–196 and 223–246; these read SELS…TESL and ITDI…KHFT.

This is an uncharacterized protein from Staphylococcus aureus (strain COL).